Reading from the N-terminus, the 424-residue chain is UPF0229 protein PC1_1960 (424 aa).

Positions 46–109 (IESGESVSIP…GQGDASKDGE (64 aa)) are disordered. The span at 77 to 90 (PGNDHFVQNDKIER) shows a compositional bias: basic and acidic residues. Positions 92–101 (QGGGGGGSGQ) are enriched in gly residues.

It belongs to the UPF0229 family.

The chain is UPF0229 protein PC1_1960 from Pectobacterium carotovorum subsp. carotovorum (strain PC1).